The chain runs to 87 residues: Small ribosomal subunit protein bS18 (87 aa).

The span at 1–10 shows a compositional bias: basic and acidic residues; that stretch reads MAGKSSGDRR. The tract at residues 1-23 is disordered; the sequence is MAGKSSGDRRKPLRGAKGGKNAA.

The protein belongs to the bacterial ribosomal protein bS18 family. As to quaternary structure, part of the 30S ribosomal subunit. Forms a tight heterodimer with protein bS6.

Its function is as follows. Binds as a heterodimer with protein bS6 to the central domain of the 16S rRNA, where it helps stabilize the platform of the 30S subunit. The sequence is that of Small ribosomal subunit protein bS18 from Clavibacter michiganensis subsp. michiganensis (strain NCPPB 382).